Here is a 260-residue protein sequence, read N- to C-terminus: 3-alpha-(or 20-beta)-hydroxysteroid dehydrogenase (260 aa).

Residues Arg17, Met19, Asp38, Asp61, Val62, Asn88, Tyr153, Lys157, Val186, Thr188, and Thr191 each coordinate NAD(+). Tyr153 (proton acceptor) is an active-site residue.

The protein belongs to the short-chain dehydrogenases/reductases (SDR) family. As to quaternary structure, homotetramer.

The catalysed reaction is androstan-3alpha,17beta-diol + NAD(+) = 17beta-hydroxyandrostanone + NADH + H(+). It functions in the pathway lipid metabolism; steroid degradation. Probably involved in steroid metabolism. The chain is 3-alpha-(or 20-beta)-hydroxysteroid dehydrogenase (fabG3) from Mycobacterium tuberculosis (strain CDC 1551 / Oshkosh).